The following is a 261-amino-acid chain: MSTLSFNNISTEVLSPLNQFEIRDLLSIDALGNLHISITNIGFYLTIGAFFFLVINLLSINYNRLVSNSWSISQESLYATIHSIVTSQINPRNGQIYFPFIYTLFIFILINNLIGMVPYSFASTSHFVVTFALSFTIVLGATILGFQKHGLEFFSLLVPAGCPLALLPLLVLIEFISYLARNISLGLRLAANILSGHMLLHILAGFTYNIMTSGIIFFFLGLIPLAFIIAFSGLELGIAFIQAQVFVVLTSGYIKDALDLH.

Positions 1-14 (MSTLSFNNISTEVL) are cleaved as a propeptide — removed in mature form. Transmembrane regions (helical) follow at residues 38 to 58 (ITNI…INLL), 96 to 116 (IYFP…LIGM), 126 to 146 (HFVV…ILGF), 153 to 173 (FFSL…LVLI), 191 to 211 (ANIL…YNIM), 214 to 234 (GIIF…FSGL), and 235 to 255 (ELGI…GYIK).

It belongs to the ATPase A chain family. In terms of assembly, F-type ATPases have 2 components, CF(1) - the catalytic core - and CF(0) - the membrane proton channel. CF(1) has five subunits: alpha(3), beta(3), gamma(1), delta(1), epsilon(1). CF(0) has three main subunits: a, b and c.

Its subcellular location is the mitochondrion inner membrane. Mitochondrial membrane ATP synthase (F(1)F(0) ATP synthase or Complex V) produces ATP from ADP in the presence of a proton gradient across the membrane which is generated by electron transport complexes of the respiratory chain. F-type ATPases consist of two structural domains, F(1) - containing the extramembraneous catalytic core and F(0) - containing the membrane proton channel, linked together by a central stalk and a peripheral stalk. During catalysis, ATP synthesis in the catalytic domain of F(1) is coupled via a rotary mechanism of the central stalk subunits to proton translocation. Key component of the proton channel; it may play a direct role in the translocation of protons across the membrane. The chain is ATP synthase subunit a (atp-6) from Neurospora crassa (strain ATCC 24698 / 74-OR23-1A / CBS 708.71 / DSM 1257 / FGSC 987).